The primary structure comprises 485 residues: MGQFISFMQEIPTFLQEALNIALVAVSLIAIIKGVVNLYKSGLFQFFVFLALAGRSCTEEAFKIGLHTEFQTVSFSMVGLFSNNPHDLPLLCTLNKSHLYIKGGNASFKISFDDIAVLLPEYDVIIQHPADMSWCSKSDDQIWLSQWFMNAVGHDWYLDPPFLCRNRTKTEGFIFQVNTSKTGINENYAKKFKTGMHHLYREYPDSCLDGKLCLMKAQPTSWPLQCPLDHVNTLHFLTRGKNIQLPRRSLKAFFSWSLTDSSGKDTPGGYCLEEWMLVAAKMKCFGNTAVAKCNLNHDSEFCDMLRLFDYNKNAIKTLNDETKKQVNLMGQTINALISDNLLMKNKIRELMSVPYCNYTKFWYVNHTLSGQHSLPRCWLIKNNSYLNISDFRNDWILESDFLISEMLSKEYSDRQGKTPLTLVDICFWSTVFFTASLFLHLVGIPTHRHIRGEACPLPHRLNSLGGCRCGKYPNLKKPTVWRRGH.

The N-myristoyl glycine; by host moiety is linked to residue glycine 2. The Extracellular portion of the chain corresponds to 2 to 17 (GQFISFMQEIPTFLQE). The helical transmembrane segment at 18–33 (ALNIALVAVSLIAIIK) threads the bilayer. Residues 34–58 (GVVNLYKSGLFQFFVFLALAGRSCT) are Cytoplasmic-facing. A Zn(2+)-binding site is contributed by cysteine 57. Residues 59–424 (EEAFKIGLHT…QGKTPLTLVD (366 aa)) are Extracellular-facing. 6 disulfide bridges follow: cysteine 92-cysteine 226, cysteine 135-cysteine 164, cysteine 207-cysteine 213, cysteine 271-cysteine 284, cysteine 293-cysteine 302, and cysteine 356-cysteine 377. Asparagine 95 and asparagine 105 each carry an N-linked (GlcNAc...) asparagine; by host glycan. 2 N-linked (GlcNAc...) asparagine; by host glycosylation sites follow: asparagine 166 and asparagine 178. The interval 250-286 (LKAFFSWSLTDSSGKDTPGGYCLEEWMLVAAKMKCFG) is fusion. The interval 287–355 (NTAVAKCNLN…KIRELMSVPY (69 aa)) is HR1. Residues asparagine 357, asparagine 365, asparagine 382, and asparagine 387 are each glycosylated (N-linked (GlcNAc...) asparagine; by host). The segment at 360-423 (KFWYVNHTLS…RQGKTPLTLV (64 aa)) is HR2. A helical membrane pass occupies residues 425–445 (ICFWSTVFFTASLFLHLVGIP). Residues 446–485 (THRHIRGEACPLPHRLNSLGGCRCGKYPNLKKPTVWRRGH) are Cytoplasmic-facing. The Zn(2+) site is built by histidine 447, histidine 449, cysteine 455, histidine 459, cysteine 467, cysteine 469, and histidine 485.

It belongs to the arenaviridae GPC protein family. As to quaternary structure, interacts with glycoprotein G2. Part of the GP complex (GP-C) together with glycoprotein G1 and glycoprotein G2. The GP-complex interacts with protein Z, which interacts with ribonucleocapsid; these interactions may induce virion budding. In terms of assembly, homotrimer; disulfide-linked. In pre-fusion state, G1 homotrimers bind G2 homotrimers via ionic interactions. Part of the GP complex (GP-C) together with glycoprotein G2 and the stable signal peptide. Interacts with host TFRC. The GP-complex interacts with protein Z, which interacts with ribonucleocapsid; these interactions may induce virion budding. Homotrimer. Interacts with the stable signal peptide. In pre-fusion state, G2 homotrimers bind G1 homotrimers via ionic interactions. Part of the GP complex (GP-C) together with glycoprotein G1 and the stable signal peptide. Acidification in the endosome triggers rearrangements, which ultimately leads to a 6 helix bundle formed by the two heptad repeat domains (HR1 and HR2) in post-fusion state. The GP-complex interacts with protein Z, which interacts with ribonucleocapsid; these interactions may induce virion budding. In terms of processing, specific enzymatic cleavages in vivo yield mature proteins. GP-C polyprotein is cleaved in the endoplasmic reticulum by the host protease MBTPS1. Only cleaved glycoprotein is incorporated into virions. The SSP remains stably associated with the GP complex following cleavage by signal peptidase and plays crucial roles in the trafficking of GP through the secretory pathway. Post-translationally, myristoylation is necessary for GP2-mediated fusion activity.

Its subcellular location is the virion membrane. The protein localises to the host endoplasmic reticulum membrane. The protein resides in the host Golgi apparatus membrane. It localises to the host cell membrane. In terms of biological role, functions as a cleaved signal peptide that is retained as the third component of the GP complex (GP-C). Helps to stabilize the spike complex in its native conformation. The SSP is required for efficient glycoprotein expression, post-translational maturation cleavage of G1 and G2, glycoprotein transport to the cell surface plasma membrane, formation of infectious virus particles, and acid pH-dependent glycoprotein-mediated cell fusion. Forms the virion spikes together with glycoprotein G2. The glycoprotein spike trimers are connected to the underlying matrix. Mediates virus attachment to host TFRC. This attachment induces virion internalization predominantly through clathrin-mediated endocytosis. Its function is as follows. Forms the virion spikes together with glycoprotein G1. The glycoprotein spike trimers are connected to the underlying matrix. Class I viral fusion protein that directs fusion of viral and host endosomal membranes, leading to delivery of the nucleocapsid into the cytoplasm. Membrane fusion is mediated by irreversible conformational changes induced by acidification. This is Pre-glycoprotein polyprotein GP complex from Junin mammarenavirus (JUNV).